The following is an 83-amino-acid chain: uncharacterized protein (83 aa).

This is an uncharacterized protein from Methanocaldococcus jannaschii (strain ATCC 43067 / DSM 2661 / JAL-1 / JCM 10045 / NBRC 100440) (Methanococcus jannaschii).